Consider the following 606-residue polypeptide: NADH-ubiquinone oxidoreductase chain 5 (606 aa).

The next 14 membrane-spanning stretches (helical) occupy residues 1-21 (MNMF…PIIM), 43-63 (AFMI…ETII), 87-107 (MIFV…SMWY), 117-137 (FFKY…ANNM), 140-160 (LFIG…WWYG), 171-191 (AVLY…WFLL), 241-261 (TPVS…FLLI), 273-293 (IQTL…ICAL), 310-330 (LGLM…LHIC), 365-385 (VLPF…GMPF), 409-429 (LLIT…IMFF), 457-477 (LLIG…PTTI), 488-508 (MTAL…NLTT), and 582-602 (GLIK…LLIL).

The protein belongs to the complex I subunit 5 family. In terms of assembly, core subunit of respiratory chain NADH dehydrogenase (Complex I) which is composed of 45 different subunits.

Its subcellular location is the mitochondrion inner membrane. The enzyme catalyses a ubiquinone + NADH + 5 H(+)(in) = a ubiquinol + NAD(+) + 4 H(+)(out). Its function is as follows. Core subunit of the mitochondrial membrane respiratory chain NADH dehydrogenase (Complex I) which catalyzes electron transfer from NADH through the respiratory chain, using ubiquinone as an electron acceptor. Essential for the catalytic activity and assembly of complex I. This Canis lupus (Gray wolf) protein is NADH-ubiquinone oxidoreductase chain 5 (MT-ND5).